Consider the following 174-residue polypeptide: Probable calcium-binding protein CML20 (174 aa).

A lipid anchor (N-myristoyl glycine) is attached at G2. The interval L14–S35 is disordered. EF-hand domains follow at residues E39–E74, A75–E100, G102–D137, and L141–A174. The Ca(2+) site is built by D52, D54, D56, E63, D83, D85, D87, E94, D115, D117, N119, E126, D154, D156, D158, and E165.

Functionally, potential calcium sensor. This chain is Probable calcium-binding protein CML20 (CML20), found in Oryza sativa subsp. japonica (Rice).